Reading from the N-terminus, the 182-residue chain is Prorelaxin (182 aa).

A signal peptide spans 1–24; sequence MPRLFSYLLGVWLLLSQLPREIPG. Residue glutamine 25 is modified to Pyrrolidone carboxylic acid. Intrachain disulfides connect cysteine 34-cysteine 169, cysteine 46-cysteine 182, and cysteine 168-cysteine 173. A propeptide spans 57 to 154 (connecting peptide); that stretch reads SLEEPQLETG…LKNLGLDKHS (98 aa). A propeptide spanning residues 159 to 160 is cleaved from the precursor; that stretch reads LF.

Belongs to the insulin family. Heterodimer of a B chain and an A chain linked by two disulfide bonds.

The protein localises to the secreted. Relaxin is an ovarian hormone that acts with estrogen to produce dilatation of the birth canal in many mammals. This Sus scrofa (Pig) protein is Prorelaxin (RLN).